The sequence spans 122 residues: Large ribosomal subunit protein uL14 (122 aa).

This sequence belongs to the universal ribosomal protein uL14 family. As to quaternary structure, part of the 50S ribosomal subunit. Forms a cluster with proteins L3 and L19. In the 70S ribosome, L14 and L19 interact and together make contacts with the 16S rRNA in bridges B5 and B8.

Its function is as follows. Binds to 23S rRNA. Forms part of two intersubunit bridges in the 70S ribosome. This chain is Large ribosomal subunit protein uL14, found in Thermomicrobium roseum (strain ATCC 27502 / DSM 5159 / P-2).